A 283-amino-acid chain; its full sequence is Small ribosomal subunit protein uS3 (283 aa).

The KH type-2 domain occupies 39-107; the sequence is VRAYLKTKLK…PVHVNIEEIR (69 aa). A disordered region spans residues 209–283; the sequence is PSGEPPVDLT…GAVPAEKAGE (75 aa). The span at 217–235 shows a compositional bias: basic and acidic residues; that stretch reads LTKEDDTKRRGPRRDDGKP. Positions 244–260 are enriched in low complexity; sequence PEGQPGAAAAPGAAPAA.

Belongs to the universal ribosomal protein uS3 family. In terms of assembly, part of the 30S ribosomal subunit. Forms a tight complex with proteins S10 and S14.

Its function is as follows. Binds the lower part of the 30S subunit head. Binds mRNA in the 70S ribosome, positioning it for translation. The sequence is that of Small ribosomal subunit protein uS3 from Herminiimonas arsenicoxydans.